The primary structure comprises 159 residues: Alpha-lactalbumin (159 aa).

An N-terminal signal peptide occupies residues 1–19 (MMRFVPLFLACISLPAFQA). The C-type lysozyme domain maps to 20-142 (TEFTKCEVSH…KLEQWRCEKP (123 aa)). Intrachain disulfides connect Cys25/Cys139, Cys47/Cys130, Cys80/Cys96, and Cys92/Cys110. A glycan (N-linked (GlcNAc...) asparagine) is linked at Asn64. Ca(2+) contacts are provided by Lys98, Asp101, Asp106, and Asp107.

This sequence belongs to the glycosyl hydrolase 22 family. As to quaternary structure, lactose synthase (LS) is a heterodimer of a catalytic component, beta1,4-galactosyltransferase (beta4Gal-T1) and a regulatory component, alpha-lactalbumin (LA). Mammary gland specific. Secreted in milk.

The protein resides in the secreted. Its function is as follows. Regulatory subunit of lactose synthase, changes the substrate specificity of galactosyltransferase in the mammary gland making glucose a good acceptor substrate for this enzyme. This enables LS to synthesize lactose, the major carbohydrate component of milk. In other tissues, galactosyltransferase transfers galactose onto the N-acetylglucosamine of the oligosaccharide chains in glycoproteins. The sequence is that of Alpha-lactalbumin (Lalba) from Rattus norvegicus (Rat).